Reading from the N-terminus, the 341-residue chain is MAKGLLVTYALWAVGGPAGLHHLYLGRDSHALLWMLTLGGGGLGWLWEFWKLPSFVAQANRAQGQRQSPRGVTPPLSPIRFAAQVIVGIYFGLVALISLSSMVNFYIVALPLAVGLGVLLVAAVGNQTSDFKNTLGAAFLTSPIFYGRPIAILPISVAASITAQKRRRYKALVASEPLSVRLYRLGLAYLAFTGPLAYSALCNTAATLSYVAETFGSFLNWFSFFPLLGRLMEFVLLLPYRIWRLLMGETGFNSSYFQEWAKLYEFVHSFQDEKRQLAYQVLGLSEGATNEEIHRSYRELVKVWHPDHNLDQTEEAQRHFLEIQAAYEVLSQPRKPRGSRR.

In terms of domain architecture, TM2 spans 3 to 50; the sequence is KGLLVTYALWAVGGPAGLHHLYLGRDSHALLWMLTLGGGGLGWLWEFW. Transmembrane regions (helical) follow at residues 5–25, 30–50, 81–101, 105–125, 135–155, 185–205, and 218–238; these read LLVT…HLYL, HALL…WEFW, FAAQ…SLSS, FYIV…AAVG, LGAA…ILPI, LGLA…CNTA, and FLNW…VLLL. Positions 277–341 constitute a J domain; the sequence is LAYQVLGLSE…QPRKPRGSRR (65 aa).

It is found in the membrane. Its function is as follows. May function as a co-chaperone. This Pongo abelii (Sumatran orangutan) protein is DnaJ homolog subfamily C member 22 (DNAJC22).